Here is a 114-residue protein sequence, read N- to C-terminus: Ribonuclease P protein component (114 aa).

Belongs to the RnpA family. Consists of a catalytic RNA component (M1 or rnpB) and a protein subunit.

It catalyses the reaction Endonucleolytic cleavage of RNA, removing 5'-extranucleotides from tRNA precursor.. Its function is as follows. RNaseP catalyzes the removal of the 5'-leader sequence from pre-tRNA to produce the mature 5'-terminus. It can also cleave other RNA substrates such as 4.5S RNA. The protein component plays an auxiliary but essential role in vivo by binding to the 5'-leader sequence and broadening the substrate specificity of the ribozyme. The sequence is that of Ribonuclease P protein component from Lactiplantibacillus plantarum (strain ATCC BAA-793 / NCIMB 8826 / WCFS1) (Lactobacillus plantarum).